The primary structure comprises 611 residues: DNA mismatch repair protein MutL (611 aa).

It belongs to the DNA mismatch repair MutL/HexB family.

Functionally, this protein is involved in the repair of mismatches in DNA. It is required for dam-dependent methyl-directed DNA mismatch repair. May act as a 'molecular matchmaker', a protein that promotes the formation of a stable complex between two or more DNA-binding proteins in an ATP-dependent manner without itself being part of a final effector complex. This Borrelia garinii subsp. bavariensis (strain ATCC BAA-2496 / DSM 23469 / PBi) (Borreliella bavariensis) protein is DNA mismatch repair protein MutL.